We begin with the raw amino-acid sequence, 365 residues long: tRNA (guanine(6)-N2)-methyltransferase (365 aa).

The THUMP domain maps to 69 to 182; sequence NENSRLLHRV…KDVFFLGIDT (114 aa). S-adenosyl-L-methionine contacts are provided by residues 198 to 202, 228 to 230, glutamate 248, 276 to 277, and asparagine 293; these read HPAHL, SGT, and DA.

Belongs to the methyltransferase superfamily. In terms of assembly, monomer in solution.

The protein resides in the cytoplasm. The enzyme catalyses guanosine(6) in tRNA + S-adenosyl-L-methionine = N(2)-methylguanosine(6) in tRNA + S-adenosyl-L-homocysteine + H(+). Functionally, S-adenosyl-L-methionine-dependent methyltransferase that catalyzes the methylation of the guanosine nucleotide at position 6 (m2G6) in tRNA(Phe). In Pyrococcus furiosus (strain ATCC 43587 / DSM 3638 / JCM 8422 / Vc1), this protein is tRNA (guanine(6)-N2)-methyltransferase.